A 528-amino-acid chain; its full sequence is Putative pumilio homolog 10 (528 aa).

The PUM-HD domain occupies 188–528 (EGSGASYPDE…KIFSKTILKK (341 aa)). 8 Pumilio repeats span residues 213-248 (EIYG…VIFL), 249-284 (EIID…MIVS), 285-323 (VLTS…ALVK), 325-360 (ALEP…FVVE), 361-396 (AATE…RLVA), 397-433 (EISR…LPFR), 434-465 (THCI…EIVR), and 466-503 (ELLS…RLVE).

It localises to the cytoplasm. Its function is as follows. Sequence-specific RNA-binding protein that regulates translation and mRNA stability by binding the 3'-UTR of target mRNAs. This chain is Putative pumilio homolog 10 (APUM10), found in Arabidopsis thaliana (Mouse-ear cress).